We begin with the raw amino-acid sequence, 172 residues long: Trypsin inhibitor 1A (172 aa).

Disulfide bonds link Cys-40-Cys-84 and Cys-133-Cys-139.

The protein belongs to the protease inhibitor I3 (leguminous Kunitz-type inhibitor) family.

WTI-1B inhibits trypsin stoichiometrically. This Psophocarpus tetragonolobus (Winged bean) protein is Trypsin inhibitor 1A.